The primary structure comprises 118 residues: Small ribosomal subunit protein uS13 (118 aa).

The disordered stretch occupies residues 94-118; sequence SLPLRGQRTKTNARTRKGPRKPIKK.

The protein belongs to the universal ribosomal protein uS13 family. Part of the 30S ribosomal subunit. Forms a loose heterodimer with protein S19. Forms two bridges to the 50S subunit in the 70S ribosome.

In terms of biological role, located at the top of the head of the 30S subunit, it contacts several helices of the 16S rRNA. In the 70S ribosome it contacts the 23S rRNA (bridge B1a) and protein L5 of the 50S subunit (bridge B1b), connecting the 2 subunits; these bridges are implicated in subunit movement. Contacts the tRNAs in the A and P-sites. The chain is Small ribosomal subunit protein uS13 from Aliivibrio fischeri (strain ATCC 700601 / ES114) (Vibrio fischeri).